Here is a 490-residue protein sequence, read N- to C-terminus: Betaine aldehyde dehydrogenase (490 aa).

Asp-93 lines the K(+) pocket. Residue 150–152 (GAW) coordinates NAD(+). Catalysis depends on Lys-162, which acts as the Charge relay system. 176–179 (KPSE) contributes to the NAD(+) binding site. Val-180 contributes to the K(+) binding site. NAD(+) is bound at residue 230–233 (GVKT). Leu-246 is a binding site for K(+). The active-site Proton acceptor is Glu-252. Residues Gly-254, Cys-286, and Glu-387 each coordinate NAD(+). The active-site Nucleophile is the Cys-286. Cys-286 bears the Cysteine sulfenic acid (-SOH) mark. K(+) contacts are provided by Lys-457 and Gly-460. Glu-464 acts as the Charge relay system in catalysis.

This sequence belongs to the aldehyde dehydrogenase family. In terms of assembly, dimer of dimers. The cofactor is K(+).

The enzyme catalyses betaine aldehyde + NAD(+) + H2O = glycine betaine + NADH + 2 H(+). It participates in amine and polyamine biosynthesis; betaine biosynthesis via choline pathway; betaine from betaine aldehyde: step 1/1. In terms of biological role, involved in the biosynthesis of the osmoprotectant glycine betaine. Catalyzes the irreversible oxidation of betaine aldehyde to the corresponding acid. The sequence is that of Betaine aldehyde dehydrogenase from Serratia proteamaculans (strain 568).